A 794-amino-acid polypeptide reads, in one-letter code: Ent-kaurene synthase 1, chloroplastic (794 aa).

Residues 1-28 (MSLLLSNSVLVGPKFRSSRISHASASLD) constitute a chloroplast transit peptide. Asp-543, Asp-547, Asn-687, and Glu-695 together coordinate Mg(2+). The short motif at 543-547 (DDFFD) is the DDXXD motif element.

This sequence belongs to the terpene synthase family. Mg(2+) is required as a cofactor. As to expression, accumulates in leaves, and, at low levels, in germinating seeds.

The protein localises to the plastid. It localises to the chloroplast. It catalyses the reaction ent-copalyl diphosphate = ent-kaur-16-ene + diphosphate. Its pathway is secondary metabolite biosynthesis; terpenoid biosynthesis. It functions in the pathway plant hormone biosynthesis; gibberellin biosynthesis. Functionally, involved in the biosynthesis of ent-kaurene diterpenoids natural products such as oridonin, miltiradiene, eriocalyxin B and nezukol, known to exhibit antitumor, anti-inflammatory and antibacterial activities, and in the production of gibberellins phytohormones. Catalyzes the conversion of ent-copalyl diphosphate (ent-CPP) to ent-kaurene. The protein is Ent-kaurene synthase 1, chloroplastic of Isodon eriocalyx (Plectranthus eriocalyx).